The primary structure comprises 328 residues: Stress response kinase A (328 aa).

Asp201 serves as the catalytic Proton acceptor. 2 residues coordinate Mg(2+): Asn206 and Asp217. Asp217 is a catalytic residue.

The protein belongs to the SrkA/RdoA protein kinase family. As to quaternary structure, monomer. Mg(2+) is required as a cofactor.

Its subcellular location is the cytoplasm. The catalysed reaction is L-seryl-[protein] + ATP = O-phospho-L-seryl-[protein] + ADP + H(+). The enzyme catalyses L-threonyl-[protein] + ATP = O-phospho-L-threonyl-[protein] + ADP + H(+). Functionally, a protein kinase that phosphorylates Ser and Thr residues. Probably acts to suppress the effects of stress linked to accumulation of reactive oxygen species. Probably involved in the extracytoplasmic stress response. This chain is Stress response kinase A, found in Escherichia coli O157:H7.